Consider the following 410-residue polypeptide: Magnesium transporter NIPA3 (410 aa).

Over 1–67 (MGAQVRLPPG…ISANVENKYS (67 aa)) the chain is Extracellular. Residues Asn-25, Asn-35, Asn-50, and Asn-55 are each glycosylated (N-linked (GlcNAc...) asparagine). Residues 68–88 (LYVGLVLAVSSSIFIGSSFIL) traverse the membrane as a helical segment. The Cytoplasmic segment spans residues 89–114 (KKKGLLQLASKGFTRAGQGGHSYLKE). The chain crosses the membrane as a helical span at residues 115–135 (WLWWVGLLSMGAGEAANFAAY). Ala-136 is a topological domain (extracellular). The chain crosses the membrane as a helical span at residues 137 to 157 (FAPATLVTPLGALSVLISAIL). Topologically, residues 158–165 (SSYFLNEH) are cytoplasmic. The chain crosses the membrane as a helical span at residues 166–186 (LNIHGKIGCILSILGSTVMVI). Residues 187 to 207 (HAPQEEEVTSLHEMEMKLRDP) lie on the Extracellular side of the membrane. A helical transmembrane segment spans residues 208–228 (GFISFAVIITVISLVLILIVA). The Cytoplasmic portion of the chain corresponds to 229–233 (PKKGQ). A helical transmembrane segment spans residues 234–254 (TNILVYISICSLIGAFSVSSV). The Extracellular segment spans residues 255–273 (KGLGIAIKELIEWKPVYKH). The helical transmembrane segment at 274–294 (PLVFVLLAVLVLSVTTQINYL) threads the bilayer. Residues 295-305 (NKALDTFNTSL) lie on the Cytoplasmic side of the membrane. The chain crosses the membrane as a helical span at residues 306–326 (VTPIYYVFFTSMVVTCSAILF). At 327 to 336 (QEWYGMTAGD) the chain is on the extracellular side. A helical membrane pass occupies residues 337 to 357 (IIGTLSGFFTIIIGIFLLHAF). The Cytoplasmic segment spans residues 358 to 410 (KNTDITWSELTSTAKKEAVSLNVNENNYVLLENLECSAPGYNDDVTLFSRTDD).

The protein belongs to the NIPA family. In terms of tissue distribution, expressed in the pancreatic islets.

The protein resides in the golgi apparatus membrane. The enzyme catalyses Mg(2+)(in) = Mg(2+)(out). In terms of biological role, acts as a Mg(2+) transporter. Can also transport other divalent cations such as Fe(2+), Sr(2+), Ba(2+), Mn(2+), Cu(2+) and Co(2+) but to a much less extent than Mg(2+). The sequence is that of Magnesium transporter NIPA3 (NIPAL1) from Homo sapiens (Human).